Here is a 345-residue protein sequence, read N- to C-terminus: Phosphoribosylformylglycinamidine cyclo-ligase (345 aa).

Belongs to the AIR synthase family.

The protein localises to the cytoplasm. The catalysed reaction is 2-formamido-N(1)-(5-O-phospho-beta-D-ribosyl)acetamidine + ATP = 5-amino-1-(5-phospho-beta-D-ribosyl)imidazole + ADP + phosphate + H(+). It functions in the pathway purine metabolism; IMP biosynthesis via de novo pathway; 5-amino-1-(5-phospho-D-ribosyl)imidazole from N(2)-formyl-N(1)-(5-phospho-D-ribosyl)glycinamide: step 2/2. The sequence is that of Phosphoribosylformylglycinamidine cyclo-ligase from Shewanella baltica (strain OS185).